The following is a 446-amino-acid chain: Immunoglobulin heavy constant gamma 3 (446 aa).

The CH1 stretch occupies residues 1–98; sequence ASTKGPSVFP…PSNTKVDKRV (98 aa). The Extracellular portion of the chain corresponds to 1-397; sequence ASTKGPSVFP…DGELDGLWTT (397 aa). Residues 6–99 enclose the Ig-like 1 domain; that stretch reads PSVFPLAPCS…SNTKVDKRVE (94 aa). A disulfide bridge links Cys-27 with Cys-83. The hinge stretch occupies residues 99 to 160; it reads ELKTPLGDTT…DTPPPCPRCP (62 aa). 3 repeats span residues 116–130, 131–145, and 146–160; these read EPKS…PRCP. 3 O-linked (GalNAc...) threonine glycosylation sites follow: Thr-122, Thr-137, and Thr-152. Positions 161-270 are CH2; that stretch reads APELLGGPSV…PIEKTISKTK (110 aa). Ig-like domains follow at residues 168–267 and 276–372; these read PSVF…KTIS and PQVY…KSLS. Disulfide bonds link Cys-191-Cys-251 and Cys-297-Cys-355. N-linked (GlcNAc...) asparagine glycans are attached at residues Asn-227 and Asn-322. Positions 271–376 are CH3; it reads GQPREPQVYT…TQKSLSLSPE (106 aa). Residues 398-418 form a helical membrane-spanning segment; it reads ITIFITLFLLSVCYSATVTFF. Over 419–446 the chain is Cytoplasmic; the sequence is KVKWIFSSVVDLKQTIIPDYRNMIGQGA.

As to quaternary structure, immunoglobulins are composed of two identical heavy chains and two identical light chains; disulfide-linked. In terms of processing, N-linked glycans at Asn-322 are noncore fucosylated and the vast majority are diantennary species with a bisecting GlcNAc. Among them the most dominant glycans are HexNAc5Hex4, HexNAc5Hex5, and HexNAc5Hex5Sia1. N-linked glycans at Asn-227 are diantennary core fucosylated structures without bisecting GlcNAc (HexNAc4Hex4Fuc1, HexNAc4Hex5Fuc1, and HexNAc4Hex5Fuc1Sia1). Glycosylation on Asn-227 is required for interaction with Fc receptors and ability to activate the complement pathway. Post-translationally, (Microbial infection) Deglycosylation on Asn-227 by S.pyogenes EndoS or Endos2 endoglucosidases prevents interaction between immunoglobulin-gamma (IgG) and Fc receptors, impairing ability to activate the complement pathway. In terms of processing, O-linked glycans are non-, mono- and disialylated core 1-type O-glycans.

The protein resides in the secreted. It is found in the cell membrane. Constant region of immunoglobulin heavy chains. Immunoglobulins, also known as antibodies, are membrane-bound or secreted glycoproteins produced by B lymphocytes. In the recognition phase of humoral immunity, the membrane-bound immunoglobulins serve as receptors which, upon binding of a specific antigen, trigger the clonal expansion and differentiation of B lymphocytes into immunoglobulins-secreting plasma cells. Secreted immunoglobulins mediate the effector phase of humoral immunity, which results in the elimination of bound antigens. The antigen binding site is formed by the variable domain of one heavy chain, together with that of its associated light chain. Thus, each immunoglobulin has two antigen binding sites with remarkable affinity for a particular antigen. The variable domains are assembled by a process called V-(D)-J rearrangement and can then be subjected to somatic hypermutations which, after exposure to antigen and selection, allow affinity maturation for a particular antigen. This Homo sapiens (Human) protein is Immunoglobulin heavy constant gamma 3.